The sequence spans 88 residues: Small ribosomal subunit protein uS15 (88 aa).

The protein belongs to the universal ribosomal protein uS15 family. As to quaternary structure, part of the 30S ribosomal subunit. Forms a bridge to the 50S subunit in the 70S ribosome, contacting the 23S rRNA.

Its function is as follows. One of the primary rRNA binding proteins, it binds directly to 16S rRNA where it helps nucleate assembly of the platform of the 30S subunit by binding and bridging several RNA helices of the 16S rRNA. In terms of biological role, forms an intersubunit bridge (bridge B4) with the 23S rRNA of the 50S subunit in the ribosome. This chain is Small ribosomal subunit protein uS15, found in Hydrogenovibrio crunogenus (strain DSM 25203 / XCL-2) (Thiomicrospira crunogena).